Here is a 484-residue protein sequence, read N- to C-terminus: Glycogen synthase (484 aa).

Lys21 is a binding site for ADP-alpha-D-glucose.

The protein belongs to the glycosyltransferase 1 family. Bacterial/plant glycogen synthase subfamily.

The enzyme catalyses [(1-&gt;4)-alpha-D-glucosyl](n) + ADP-alpha-D-glucose = [(1-&gt;4)-alpha-D-glucosyl](n+1) + ADP + H(+). The protein operates within glycan biosynthesis; glycogen biosynthesis. Its function is as follows. Synthesizes alpha-1,4-glucan chains using ADP-glucose. The sequence is that of Glycogen synthase from Pseudomonas syringae pv. tomato (strain ATCC BAA-871 / DC3000).